We begin with the raw amino-acid sequence, 190 residues long: GTP cyclohydrolase 1 (190 aa).

Zn(2+) is bound by residues cysteine 80, histidine 83, and cysteine 151.

The protein belongs to the GTP cyclohydrolase I family. In terms of assembly, toroid-shaped homodecamer, composed of two pentamers of five dimers.

It carries out the reaction GTP + H2O = 7,8-dihydroneopterin 3'-triphosphate + formate + H(+). It functions in the pathway cofactor biosynthesis; 7,8-dihydroneopterin triphosphate biosynthesis; 7,8-dihydroneopterin triphosphate from GTP: step 1/1. The sequence is that of GTP cyclohydrolase 1 from Rickettsia felis (strain ATCC VR-1525 / URRWXCal2) (Rickettsia azadi).